A 195-amino-acid chain; its full sequence is Inner membrane-spanning protein YciB (195 aa).

Transmembrane regions (helical) follow at residues I34 to L54, F65 to F85, W88 to G108, L131 to F151, and F160 to L180.

The protein belongs to the YciB family.

The protein resides in the cell inner membrane. Plays a role in cell envelope biogenesis, maintenance of cell envelope integrity and membrane homeostasis. This chain is Inner membrane-spanning protein YciB, found in Pseudomonas paraeruginosa (strain DSM 24068 / PA7) (Pseudomonas aeruginosa (strain PA7)).